The chain runs to 346 residues: Annexin A1 (346 aa).

At serine 5 the chain carries Phosphoserine; by TRPM7. Residue glutamine 19 forms an Isoglutamyl lysine isopeptide (Gln-Lys) (interchain with K-?) linkage. Residue tyrosine 21 is modified to Phosphotyrosine; by EGFR. Residues serine 34 and serine 37 each carry the phosphoserine modification. Annexin repeat units lie at residues 42-113, 114-185, 197-269, and 273-344; these read FNPS…ALLK, TPAR…SLAK, DLAD…AIVK, and SKPM…ALCG. At lysine 58 the chain carries N6-acetyllysine. Glycine 59, valine 60, glutamate 62, lysine 97, leucine 100, glutamate 105, methionine 127, glycine 129, glycine 131, threonine 132, and glutamate 134 together coordinate Ca(2+). The residue at position 136 (threonine 136) is a Phosphothreonine. Positions 171, 210, and 213 each coordinate Ca(2+). Residue lysine 214 forms a Glycyl lysine isopeptide (Lys-Gly) (interchain with G-Cter in SUMO1); alternate linkage. Lysine 214 participates in a covalent cross-link: Glycyl lysine isopeptide (Lys-Gly) (interchain with G-Cter in SUMO2); alternate. Ca(2+) is bound by residues glycine 215, aspartate 253, glutamate 255, and methionine 256. Lysine 257 participates in a covalent cross-link: Glycyl lysine isopeptide (Lys-Gly) (interchain with G-Cter in SUMO1). Ca(2+) contacts are provided by glutamate 261, methionine 286, glycine 288, and glycine 290. Position 312 is an N6-acetyllysine (lysine 312). A disulfide bridge links cysteine 324 with cysteine 343. Residues leucine 328, glutamate 330, and threonine 331 each contribute to the Ca(2+) site. Lysine 332 is covalently cross-linked (Glycyl lysine isopeptide (Lys-Gly) (interchain with G-Cter in SUMO1)). Ca(2+) is bound at residue glutamate 336.

It belongs to the annexin family. Homodimer; non-covalently linked. Homodimer; linked by transglutamylation. Homodimers linked by transglutamylation are observed in placenta, but not in other tissues. Interacts with S100A11. Heterotetramer, formed by two molecules each of S100A11 and ANXA1. Interacts with DYSF. Interacts with EGFR. In terms of processing, phosphorylated by protein kinase C, EGFR and TRPM7. Phosphorylated in response to EGF treatment. Sumoylated. Post-translationally, proteolytically cleaved by cathepsin CTSG to release the active N-terminal peptide Ac2-26.

Its subcellular location is the nucleus. It is found in the cytoplasm. The protein resides in the cell projection. The protein localises to the cilium. It localises to the basolateral cell membrane. Its subcellular location is the lateral cell membrane. It is found in the cell membrane. The protein resides in the apical cell membrane. The protein localises to the membrane. It localises to the early endosome. Its subcellular location is the cytoplasmic vesicle membrane. It is found in the endosome membrane. The protein resides in the secreted. The protein localises to the extracellular space. It localises to the extracellular exosome. Its subcellular location is the cytoplasmic vesicle. It is found in the secretory vesicle lumen. The protein resides in the phagocytic cup. Plays important roles in the innate immune response as effector of glucocorticoid-mediated responses and regulator of the inflammatory process. Has anti-inflammatory activity. Plays a role in glucocorticoid-mediated down-regulation of the early phase of the inflammatory response. Contributes to the adaptive immune response by enhancing signaling cascades that are triggered by T-cell activation, regulates differentiation and proliferation of activated T-cells. Promotes the differentiation of T-cells into Th1 cells and negatively regulates differentiation into Th2 cells. Has no effect on unstimulated T-cells. Negatively regulates hormone exocytosis via activation of the formyl peptide receptors and reorganization of the actin cytoskeleton. Has high affinity for Ca(2+) and can bind up to eight Ca(2+) ions. Displays Ca(2+)-dependent binding to phospholipid membranes. Plays a role in the formation of phagocytic cups and phagosomes. Plays a role in phagocytosis by mediating the Ca(2+)-dependent interaction between phagosomes and the actin cytoskeleton. Its function is as follows. Functions at least in part by activating the formyl peptide receptors and downstream signaling cascades. Promotes chemotaxis of granulocytes and monocytes via activation of the formyl peptide receptors. Promotes rearrangement of the actin cytoskeleton, cell polarization and cell migration. Promotes resolution of inflammation and wound healing. Acts via neutrophil N-formyl peptide receptors to enhance the release of CXCL2. In Equus caballus (Horse), this protein is Annexin A1 (ANXA1).